Reading from the N-terminus, the 197-residue chain is Recombination protein RecR (197 aa).

The segment at 57–72 (CSVCFAITEDDPCWIC) adopts a C4-type zinc-finger fold. The 96-residue stretch at 79–174 (GTICVVEEPQ…KVTRLAHGIP (96 aa)) folds into the Toprim domain.

The protein belongs to the RecR family.

May play a role in DNA repair. It seems to be involved in an RecBC-independent recombinational process of DNA repair. It may act with RecF and RecO. This is Recombination protein RecR from Geobacter sp. (strain M21).